The primary structure comprises 129 residues: Arsenate-mycothiol transferase ArsC2 (129 aa).

The protein belongs to the low molecular weight phosphotyrosine protein phosphatase family.

The protein resides in the cytoplasm. The enzyme catalyses mycothiol + arsenate = arseno-mycothiol + H2O. Its function is as follows. Involved in defense against toxic arsenate. Involved in the mycothiol/myoredoxin redox pathway which uses a mycothioltransferase mechanism; facilitates adduct formation between arsenate and mycothiol. This is Arsenate-mycothiol transferase ArsC2 (arsC2) from Corynebacterium glutamicum (strain ATCC 13032 / K051).